We begin with the raw amino-acid sequence, 122 residues long: Cofilin-5 (122 aa).

In terms of domain architecture, ADF-H spans 3-122 (SRIIEIDPNC…VKDLIQLSNL (120 aa)).

It belongs to the actin-binding proteins ADF family.

It is found in the cytoplasm. The protein localises to the cytoskeleton. Functionally, controls actin polymerization and depolymerization. In Dictyostelium discoideum (Social amoeba), this protein is Cofilin-5 (cofF).